The primary structure comprises 431 residues: Histidinol dehydrogenase (431 aa).

NAD(+) contacts are provided by Tyr-124, Gln-187, and Asn-210. 3 residues coordinate substrate: Ser-236, Gln-258, and His-261. Positions 258 and 261 each coordinate Zn(2+). Active-site proton acceptor residues include Glu-325 and His-326. His-326, Asp-359, Glu-413, and His-418 together coordinate substrate. Asp-359 provides a ligand contact to Zn(2+). Residue His-418 participates in Zn(2+) binding.

Belongs to the histidinol dehydrogenase family. Zn(2+) is required as a cofactor.

It catalyses the reaction L-histidinol + 2 NAD(+) + H2O = L-histidine + 2 NADH + 3 H(+). It participates in amino-acid biosynthesis; L-histidine biosynthesis; L-histidine from 5-phospho-alpha-D-ribose 1-diphosphate: step 9/9. Catalyzes the sequential NAD-dependent oxidations of L-histidinol to L-histidinaldehyde and then to L-histidine. The protein is Histidinol dehydrogenase of Legionella pneumophila (strain Lens).